The chain runs to 328 residues: 5'-AMP-activated protein kinase subunit gamma (328 aa).

4 consecutive CBS domains span residues 42–103 (VSYR…PDKF), 123–186 (IQPY…CKEI), 199–259 (ISTN…YNDL), and 268–328 (MRRS…FAES). Residues Ile-47, Arg-150, Arg-151, 171–174 (TQYR), 227–228 (SS), and 297–299 (RVH) each bind ADP. Arg-150 contacts AMP. Arg-150 contacts ATP. 227 to 228 (SS) lines the AMP pocket. 227-228 (SS) contacts ATP. ATP is bound by residues Arg-300 and 313 to 318 (VLTLSD). Residue 315–318 (TLSD) participates in ADP binding. Residue 315 to 318 (TLSD) coordinates AMP.

Belongs to the 5'-AMP-activated protein kinase gamma subunit family. As to quaternary structure, AMPK is a heterotrimer of an alpha catalytic subunit, a beta and a gamma non-catalytic subunits.

The protein resides in the nucleus. The protein localises to the cytoplasm. Its function is as follows. Adenine nucleotides-binding subunit gamma of AMP-activated protein kinase (AMPK), an energy sensor protein kinase that plays a key role in regulating cellular energy metabolism. In response to reduction of intracellular ATP levels, AMPK activates energy-producing pathways and inhibits energy-consuming processes: inhibits protein, carbohydrate and lipid biosynthesis, as well as cell growth and proliferation. AMPK acts via direct phosphorylation of metabolic enzymes, and by longer-term effects via phosphorylation of transcription regulators. Gamma non-catalytic subunit mediates binding to AMP, ADP and ATP, leading to activate or inhibit AMPK: AMP-binding results in allosteric activation of alpha catalytic subunit (SNF1) both by inducing phosphorylation and preventing dephosphorylation of catalytic subunits. The polypeptide is 5'-AMP-activated protein kinase subunit gamma (SNF4) (Kluyveromyces lactis (strain ATCC 8585 / CBS 2359 / DSM 70799 / NBRC 1267 / NRRL Y-1140 / WM37) (Yeast)).